Consider the following 582-residue polypeptide: Protein bps2 (582 aa).

ATP is bound at residue 28–35 (APNAYGKT). Positions 243 to 281 (RQSYERQLQEINAQLQKITAQRNEAEIEIRLLEKVLDQI) form a coiled coil. The region spanning 243–351 (RQSYERQLQE…KLKELDQISS (109 aa)) is the Zinc-hook domain. C292 and C295 together coordinate Zn(2+). The stretch at 320–351 (SLYAGIKKEADELLSKKSEIEKKLKELDQISS) forms a coiled coil.

This chain is Protein bps2 (bps2), found in Acidianus ambivalens (Desulfurolobus ambivalens).